Consider the following 64-residue polypeptide: Long neurotoxin MS4 (64 aa).

5 disulfides stabilise this stretch: C3-C24, C6-C11, C17-C41, C45-C57, and C58-C63.

It belongs to the three-finger toxin family. Ancestral subfamily. Expressed by the venom gland.

The protein resides in the secreted. Functionally, produces peripheral paralysis by blocking neuromuscular transmission at the postsynaptic site. Weak inhibitor of the endogenous nicotinic acetylcholine receptors (nAChR) in the human rhabdomyosarcoma TE 671 cell line with an IC(50) of 690 mM. This neurotoxin is lethal to zebrafish by injection at the back of the dorsolateral region, but is not toxic to mice by intraperitoneal injection. This Micrurus surinamensis (Surinam coral snake) protein is Long neurotoxin MS4.